The primary structure comprises 146 residues: NADH-quinone oxidoreductase subunit A (146 aa).

3 consecutive transmembrane segments (helical) span residues 14–34 (FALF…GGFL), 68–88 (LVAM…AWAV), and 96–116 (IGFI…IYLV).

The protein belongs to the complex I subunit 3 family. In terms of assembly, NDH-1 is composed of 13 different subunits. Subunits NuoA, H, J, K, L, M, N constitute the membrane sector of the complex.

Its subcellular location is the cell inner membrane. It catalyses the reaction a quinone + NADH + 5 H(+)(in) = a quinol + NAD(+) + 4 H(+)(out). Functionally, NDH-1 shuttles electrons from NADH, via FMN and iron-sulfur (Fe-S) centers, to quinones in the respiratory chain. The immediate electron acceptor for the enzyme in this species is believed to be ubiquinone. Couples the redox reaction to proton translocation (for every two electrons transferred, four hydrogen ions are translocated across the cytoplasmic membrane), and thus conserves the redox energy in a proton gradient. The sequence is that of NADH-quinone oxidoreductase subunit A from Pectobacterium atrosepticum (strain SCRI 1043 / ATCC BAA-672) (Erwinia carotovora subsp. atroseptica).